We begin with the raw amino-acid sequence, 64 residues long: Hypoxia-inducible lipid droplet-associated protein (64 aa).

The interval 1–37 (MKFMLNLYVLGIMLTLLSIFVRVMESLGGLLESPLPG) is required for targeting to lipid droplets. Residues 7–24 (LYVLGIMLTLLSIFVRVM) traverse the membrane as a helical segment. The segment covering 42-51 (TRGQLANTQP) has biased composition (polar residues). Residues 42-64 (TRGQLANTQPPKGLPDHPSRGVQ) form a disordered region. Basic and acidic residues predominate over residues 55–64 (LPDHPSRGVQ).

The protein localises to the lipid droplet. The protein resides in the secreted. It localises to the membrane. Increases intracellular lipid accumulation. Stimulates expression of cytokines including IL6, MIF and VEGFA. Enhances cell growth and proliferation. The protein is Hypoxia-inducible lipid droplet-associated protein (Hilpda) of Mus musculus (Mouse).